The following is a 388-amino-acid chain: Succinate--CoA ligase [ADP-forming] subunit beta (388 aa).

The ATP-grasp domain occupies 9 to 244; that stretch reads KALFAEYGLP…PSQDDAREAH (236 aa). ATP contacts are provided by residues Lys-46, 53–55, Glu-99, Thr-102, and Glu-107; that span reads GRG. 2 residues coordinate Mg(2+): Asn-199 and Asp-213. Substrate-binding positions include Asn-264 and 321–323; that span reads GIV.

It belongs to the succinate/malate CoA ligase beta subunit family. Heterotetramer of two alpha and two beta subunits. It depends on Mg(2+) as a cofactor.

It carries out the reaction succinate + ATP + CoA = succinyl-CoA + ADP + phosphate. The catalysed reaction is GTP + succinate + CoA = succinyl-CoA + GDP + phosphate. It participates in carbohydrate metabolism; tricarboxylic acid cycle; succinate from succinyl-CoA (ligase route): step 1/1. Functionally, succinyl-CoA synthetase functions in the citric acid cycle (TCA), coupling the hydrolysis of succinyl-CoA to the synthesis of either ATP or GTP and thus represents the only step of substrate-level phosphorylation in the TCA. The beta subunit provides nucleotide specificity of the enzyme and binds the substrate succinate, while the binding sites for coenzyme A and phosphate are found in the alpha subunit. The chain is Succinate--CoA ligase [ADP-forming] subunit beta from Shewanella loihica (strain ATCC BAA-1088 / PV-4).